The chain runs to 115 residues: Large ribosomal subunit protein bL20c (115 aa).

Belongs to the bacterial ribosomal protein bL20 family.

The protein localises to the plastid. The protein resides in the chloroplast. Its function is as follows. Binds directly to 23S ribosomal RNA and is necessary for the in vitro assembly process of the 50S ribosomal subunit. It is not involved in the protein synthesizing functions of that subunit. This is Large ribosomal subunit protein bL20c from Nymphaea alba (White water-lily).